The following is a 125-amino-acid chain: SOSS complex subunit C homolog B (125 aa).

Disordered stretches follow at residues 44-73 (PAPQLLGQPTTTTATPDLVSTNSTPPRAAF) and 105-125 (PATPSTTTPPITPIANANNPK).

It belongs to the SOSS-C family.

This Drosophila willistoni (Fruit fly) protein is SOSS complex subunit C homolog B.